The sequence spans 647 residues: UvrABC system protein C (647 aa).

The 81-residue stretch at 26–106 folds into the GIY-YIG domain; it reads SEPGCYLMRD…IKEHQPYFNI (81 aa). One can recognise a UVR domain in the interval 216-251; that stretch reads DQLKDLLHKQMLIQSKLQEFEKAAIIRDQIKGIEQL.

Belongs to the UvrC family. Interacts with UvrB in an incision complex.

The protein localises to the cytoplasm. In terms of biological role, the UvrABC repair system catalyzes the recognition and processing of DNA lesions. UvrC both incises the 5' and 3' sides of the lesion. The N-terminal half is responsible for the 3' incision and the C-terminal half is responsible for the 5' incision. This is UvrABC system protein C from Prochlorococcus marinus (strain MIT 9211).